The sequence spans 740 residues: Ribosome-releasing factor 2, mitochondrial (740 aa).

A mitochondrion-targeting transit peptide spans 1–29 (MLKYAWQSGPKQSNRWLWHLSNQIWKRSY). A tr-type G domain is found at 31–310 (SKIRNIGILA…AVNAYLPAPE (280 aa)). GTP-binding positions include 40–47 (AHIDAGKT), 104–108 (DTPGH), and 158–161 (NKMD).

It belongs to the TRAFAC class translation factor GTPase superfamily. Classic translation factor GTPase family. EF-G/EF-2 subfamily.

It is found in the mitochondrion. In terms of biological role, mitochondrial GTPase that mediates the disassembly of ribosomes from messenger RNA at the termination of mitochondrial protein biosynthesis. Not involved in the GTP-dependent ribosomal translocation step during translation elongation. The protein is Ribosome-releasing factor 2, mitochondrial of Drosophila melanogaster (Fruit fly).